The chain runs to 80 residues: MSKGQTLQEPFLNALRKERIPVSIYLVNGIKLQGQIDSFDQFVVLLKNTVSQMVYKHAISTIVPSRPVKLAMPEDMQPED.

A Sm domain is found at 9-68 (EPFLNALRKERIPVSIYLVNGIKLQGQIDSFDQFVVLLKNTVSQMVYKHAISTIVPSRPV).

Belongs to the Hfq family. In terms of assembly, homohexamer.

Functionally, RNA chaperone that binds small regulatory RNA (sRNAs) and mRNAs to facilitate mRNA translational regulation in response to envelope stress, environmental stress and changes in metabolite concentrations. Also binds with high specificity to tRNAs. The sequence is that of RNA-binding protein Hfq from Thioalkalivibrio sulfidiphilus (strain HL-EbGR7).